Consider the following 410-residue polypeptide: MSSFDYLKTAIKQQGCTLQQVADASGMTKGYLSQLLNAKIKSPSAQKLEALHRFLGLEFPRQKKTIGVVFGKFYPLHTGHIYLIQRACSQVDELHIIMGFDDTRDRALFEDSAMSQQPTVPDRLRWLLQTFKYQKNIRIHAFNEEGMEPYPHGWDVWSNGIKKFMAEKGIQPDLIYTSEEADAPQYMEHLGIETVLVDPKRTFMSISGAQIRENPFRYWEYIPTEVKPFFVRTVAILGGESSGKSTLVNKLANIFNTTSAWEYGRDYVFSHLGGDEIALQYSDYDKIALGHAQYIDFAVKYANKVAFIDTDFVTTQAFCKKYEGREHPFVQALIDEYRFDLVILLENNTPWVADGLRSLGSSVDRKEFQNLLVEMLEENNIEFVRVEEEDYDSRFLRCVELVREMMGEQR.

The region spanning 7–62 is the HTH cro/C1-type domain; the sequence is LKTAIKQQGCTLQQVADASGMTKGYLSQLLNAKIKSPSAQKLEALHRFLGLEFPRQ. The segment at residues 18–37 is a DNA-binding region (H-T-H motif); it reads LQQVADASGMTKGYLSQLLN. Positions 63 to 229 are nicotinamide mononucleotide adenylyltransferase; that stretch reads KKTIGVVFGK…EYIPTEVKPF (167 aa). NAD(+)-binding positions include 70–73, H77, R104, 144–157, 177–179, 204–206, 259–261, and 294–297; these read FGKF, EEGM…WDVW, TSE, MSI, SAW, and YIDF. The tract at residues 230 to 410 is ribosylnicotinamide kinase; the sequence is FVRTVAILGG…LVREMMGEQR (181 aa).

In the central section; belongs to the bacterial NMN adenylyltransferase family. This sequence in the C-terminal section; belongs to the bacterial RNK family. As to quaternary structure, homotetramer.

The protein localises to the cell membrane. It is found in the cytoplasm. The enzyme catalyses beta-nicotinamide D-ribonucleotide + ATP + H(+) = diphosphate + NAD(+). The catalysed reaction is beta-nicotinamide D-riboside + ATP = beta-nicotinamide D-ribonucleotide + ADP + H(+). It functions in the pathway cofactor biosynthesis; NAD(+) biosynthesis [regulation]. Its pathway is cofactor biosynthesis; NAD(+) biosynthesis; NAD(+) from nicotinamide D-ribonucleotide: step 1/1. With respect to regulation, feed-back regulated by NAD. A high level of NAD causes NadR to lose enzymatic activity and repress several NAD synthetic genes; conversely, a low NAD level activates the assimilatory enzymatic activities and leads to derepression of biosynthetic genes. Its function is as follows. This enzyme has three activities: DNA binding, nicotinamide mononucleotide (NMN) adenylyltransferase and ribosylnicotinamide (RN) kinase. The DNA-binding domain binds to the nadB operator sequence in an NAD- and ATP-dependent manner. As NAD levels increase within the cell, the affinity of NadR for the nadB operator regions of nadA, nadB, and pncB increases, repressing the transcription of these genes. The RN kinase activity catalyzes the phosphorylation of RN to form nicotinamide ribonucleotide. The NMN adenylyltransferase activity catalyzes the transfer of the AMP moiety of ATP to nicotinamide ribonucleotide to form NAD(+). The NMN adenylyltransferase domain also functions as the NAD and ATP sensor. The chain is Trifunctional NAD biosynthesis/regulator protein NadR (nadR) from Escherichia coli (strain K12).